We begin with the raw amino-acid sequence, 104 residues long: V-type ATP synthase subunit F (104 aa).

The protein belongs to the V-ATPase F subunit family.

Functionally, produces ATP from ADP in the presence of a proton gradient across the membrane. This chain is V-type ATP synthase subunit F (atpF), found in Thermus thermophilus (strain ATCC 27634 / DSM 579 / HB8).